We begin with the raw amino-acid sequence, 721 residues long: DNA ligase (721 aa).

The segment covering 1–19 has biased composition (low complexity); the sequence is MTAKKQGAQASASAPSGDS. The segment at 1–23 is disordered; the sequence is MTAKKQGAQASASAPSGDSPAER. Residues 48-52, 97-98, and Glu162 contribute to the NAD(+) site; these read DADYD and SL. Lys164 functions as the N6-AMP-lysine intermediate in the catalytic mechanism. NAD(+) contacts are provided by Arg185, Glu221, Lys338, and Lys362. 4 residues coordinate Zn(2+): Cys456, Cys459, Cys474, and Cys480. Residues 639–721 enclose the BRCT domain; it reads RAPLPLAGKT…LKLLAEVGAA (83 aa).

Belongs to the NAD-dependent DNA ligase family. LigA subfamily. Requires Mg(2+) as cofactor. Mn(2+) serves as cofactor.

The enzyme catalyses NAD(+) + (deoxyribonucleotide)n-3'-hydroxyl + 5'-phospho-(deoxyribonucleotide)m = (deoxyribonucleotide)n+m + AMP + beta-nicotinamide D-nucleotide.. DNA ligase that catalyzes the formation of phosphodiester linkages between 5'-phosphoryl and 3'-hydroxyl groups in double-stranded DNA using NAD as a coenzyme and as the energy source for the reaction. It is essential for DNA replication and repair of damaged DNA. The polypeptide is DNA ligase (Cupriavidus metallidurans (strain ATCC 43123 / DSM 2839 / NBRC 102507 / CH34) (Ralstonia metallidurans)).